The chain runs to 508 residues: Aspartic proteinase yapsin-3 (508 aa).

Positions Met1–Gly20 are cleaved as a signal peptide. A propeptide spanning residues Arg21–Arg47 is cleaved from the precursor. In terms of domain architecture, Peptidase A1 spans Tyr63–Ala394. N-linked (GlcNAc...) asparagine glycosylation is present at Asn75. Asp81 is a catalytic residue. Asn120, Asn160, Asn163, and Asn275 each carry an N-linked (GlcNAc...) asparagine glycan. Asp288 is an active-site residue. Asn309, Asn328, Asn367, Asn422, Asn445, and Asn462 each carry an N-linked (GlcNAc...) asparagine glycan. Over residues Ser448–Lys468 the composition is skewed to low complexity. The tract at residues Ser448 to Ala476 is disordered. Residue Asn483 is the site of GPI-anchor amidated asparagine attachment. The propeptide at Ser484–Ser508 is removed in mature form.

It belongs to the peptidase A1 family. Post-translationally, can also be processed to start at Phe-54.

It localises to the cell membrane. Its function is as follows. Cleaves proteins C-terminally to mono- and paired-basic residues. Required for cell wall integrity. In Saccharomyces cerevisiae (strain ATCC 204508 / S288c) (Baker's yeast), this protein is Aspartic proteinase yapsin-3 (YPS3).